A 132-amino-acid chain; its full sequence is Sirohydrochlorin cobaltochelatase (132 aa).

The active-site Proton acceptor is H10. Residue H10 coordinates Co(2+). Substrate-binding positions include R46 and 69–74 (ISYGLH). H74 is a binding site for Co(2+).

This sequence belongs to the CbiX family. CbiXS subfamily. In terms of assembly, homotetramer; dimer of dimers.

The catalysed reaction is Co-sirohydrochlorin + 2 H(+) = sirohydrochlorin + Co(2+). Its pathway is cofactor biosynthesis; adenosylcobalamin biosynthesis; cob(II)yrinate a,c-diamide from sirohydrochlorin (anaerobic route): step 1/10. Catalyzes the insertion of Co(2+) into sirohydrochlorin as part of the anaerobic pathway to cobalamin biosynthesis. This is Sirohydrochlorin cobaltochelatase from Archaeoglobus fulgidus (strain ATCC 49558 / DSM 4304 / JCM 9628 / NBRC 100126 / VC-16).